Reading from the N-terminus, the 574-residue chain is Lipase maturation factor 1 (574 aa).

The disordered stretch occupies residues 1–39 (MRPDSLVMAAPEGSLRKRKVGGAEHSPASQPSLARDPAD). Topologically, residues 1-49 (MRPDSLVMAAPEGSLRKRKVGGAEHSPASQPSLARDPADSPARLHTGTF) are cytoplasmic. The helical transmembrane segment at 50-72 (WLTRIVLLRALAFIYFVAFLVAF) threads the bilayer. Residues 73–127 (NQNKALIGDRGLLPCKLYLKNVQEYFQGSTGWAAWTYAPTIMWLLDWSDMNFNLD) lie on the Lumenal side of the membrane. Residues 128–151 (LIALLGLGISSFVLVTGCANMILM) traverse the membrane as a helical segment. The Cytoplasmic portion of the chain corresponds to 152-207 (TALWALYMSLVNVGQIWYSFGWESQLLETGFLGIFLSPLWTLSRLPKNTPTSQIVL). A helical transmembrane segment spans residues 208–221 (WGFRWLIFRIMLGA). Residues 222 to 292 (GLIKVRGDKC…LGRRMRILHG (71 aa)) lie on the Lumenal side of the membrane. A helical transmembrane segment spans residues 293–321 (VLQILFQVILIISGNLSFLNWLTIVPSLA). Over 322-367 (CFDDAALGFLFPSGPQGLKKQVLEIQREDTQRVQPKPRDRGCLVRQ) the chain is Cytoplasmic. Residues 368–388 (VVNISLGILVAWLSVPVVINL) form a helical membrane-spanning segment. Topologically, residues 389–574 (LSSRQIMNTS…LPEPPSRHTR (186 aa)) are lumenal.

This sequence belongs to the lipase maturation factor family. As to quaternary structure, interacts with LPL and SEL1L. Expressed in all tissues synthesizing lipoprotein lipase (Lpl) and hepatic lipase (Lipc), including adipose tissue, skeletal muscle, heart, and liver. Expressed at higher levels in tissues that express little or no lipase activity such as testis and pancreas suggesting additional functions in these tissues.

The protein resides in the endoplasmic reticulum membrane. Functionally, involved in the maturation of specific proteins in the endoplasmic reticulum. Required for maturation and transport of active lipoprotein lipase (LPL) through the secretory pathway. Each LMF1 molecule chaperones 50 or more molecules of LPL. This is Lipase maturation factor 1 (Lmf1) from Mus musculus (Mouse).